Reading from the N-terminus, the 463-residue chain is L-2-hydroxyglutarate dehydrogenase, mitochondrial (463 aa).

The transit peptide at 1–51 (MVPALRYLVGACGRARGLFAGGSPGACGFASGRPRPLCGGSRSASTSSFDI) directs the protein to the mitochondrion. An N6-acetyllysine mark is found at K104, K155, and K173.

Belongs to the L2HGDH family. Requires FAD as cofactor. As to expression, widely expressed. Highly expressed in brain, testis and muscle. Expressed to a lower extent in lymphocytes, fibroblasts, keratinocytes, placenta, bladder, small intestine, liver and bone marrow.

The protein resides in the mitochondrion. The catalysed reaction is (S)-2-hydroxyglutarate + A = 2-oxoglutarate + AH2. The protein is L-2-hydroxyglutarate dehydrogenase, mitochondrial (L2HGDH) of Homo sapiens (Human).